Reading from the N-terminus, the 144-residue chain is ATP synthase epsilon chain (144 aa).

It belongs to the ATPase epsilon chain family. As to quaternary structure, F-type ATPases have 2 components, CF(1) - the catalytic core - and CF(0) - the membrane proton channel. CF(1) has five subunits: alpha(3), beta(3), gamma(1), delta(1), epsilon(1). CF(0) has three main subunits: a, b and c.

The protein localises to the cell inner membrane. Produces ATP from ADP in the presence of a proton gradient across the membrane. The protein is ATP synthase epsilon chain of Ectopseudomonas mendocina (strain ymp) (Pseudomonas mendocina).